Here is a 382-residue protein sequence, read N- to C-terminus: Alcohol dehydrogenase 4 (382 aa).

It belongs to the iron-containing alcohol dehydrogenase family. As to quaternary structure, homodimer. Zn(2+) is required as a cofactor. It depends on Fe(2+) as a cofactor.

The protein resides in the mitochondrion. The enzyme catalyses a primary alcohol + NAD(+) = an aldehyde + NADH + H(+). It carries out the reaction a secondary alcohol + NAD(+) = a ketone + NADH + H(+). Inhibited by EDTA. Functionally, reduces acetaldehyde to ethanol during glucose fermentation. Specific for ethanol. Shows drastically reduced activity towards primary alcohols from 4 carbon atoms upward. Isomers of aliphatic alcohol, as well as secondary alcohols and glycerol are not used at all. This Saccharomyces cerevisiae (strain YJM789) (Baker's yeast) protein is Alcohol dehydrogenase 4 (ADH4).